A 149-amino-acid polypeptide reads, in one-letter code: Histone H2B.3, sperm (149 aa).

The segment at 1–57 (MPRSPAKTSPRKGSPRKGSPRKGSPSRKASPKRGGKGAKRAGKGGRRRRVVKRRRRR) is disordered. 6 short sequence motifs (SPKK motif) span residues 4–7 (SPAK), 9–12 (SPRK), 14–17 (SPRK), 19–22 (SPRK), 24–27 (SPSR), and 30–33 (SPKR). Over residues 9-20 (SPRKGSPRKGSP) the composition is skewed to basic residues. S19, S24, and S30 each carry phosphoserine. Residues 29-57 (ASPKRGGKGAKRAGKGGRRRRVVKRRRRR) show a composition bias toward basic residues. The O-linked (GlcNAc) serine glycan is linked to S136. A Glycyl lysine isopeptide (Lys-Gly) (interchain with G-Cter in ubiquitin) cross-link involves residue K144.

The protein belongs to the histone H2B family. As to quaternary structure, the nucleosome is a histone octamer containing two molecules each of H2A, H2B, H3 and H4 assembled in one H3-H4 heterotetramer and two H2A-H2B heterodimers. The octamer wraps approximately 147 bp of DNA. In terms of processing, monoubiquitination of Lys-144 gives a specific tag for epigenetic transcriptional activation and is also prerequisite for histone H3 'Lys-4' and 'Lys-79' methylation. Post-translationally, phosphorylated on SPKK motifs 4, 5 and 6; which may regulate DNA binding. Dephosphorylated during maturation of spermatids to mature sperm and rephosphorylated at fertilization. GlcNAcylation at Ser-136 promotes monoubiquitination of Lys-144. It fluctuates in response to extracellular glucose, and associates with transcribed genes.

The protein resides in the nucleus. Its subcellular location is the chromosome. Functionally, core component of nucleosome. Nucleosomes wrap and compact DNA into chromatin, limiting DNA accessibility to the cellular machineries which require DNA as a template. Histones thereby play a central role in transcription regulation, DNA repair, DNA replication and chromosomal stability. DNA accessibility is regulated via a complex set of post-translational modifications of histones, also called histone code, and nucleosome remodeling. The sequence is that of Histone H2B.3, sperm from Parechinus angulosus (Angulate sea urchin).